A 345-amino-acid polypeptide reads, in one-letter code: Beta-2-glycoprotein 1 (345 aa).

A signal peptide spans 1–19 (MISPVLILFSSFLCHVAIA). Sushi domains lie at 21-81 (RTCP…KCTP), 82-139 (RVCP…VCAP), 140-202 (IICP…ECRE), and 203-262 (VKCP…SCKA). 11 disulfide bridges follow: Cys-23–Cys-66, Cys-51–Cys-79, Cys-84–Cys-124, Cys-110–Cys-137, Cys-142–Cys-188, Cys-174–Cys-200, Cys-205–Cys-248, Cys-234–Cys-260, Cys-264–Cys-315, Cys-300–Cys-325, and Cys-307–Cys-345. An O-linked (GalNAc...) threonine glycan is attached at Thr-33. Thr-149 carries an O-linked (GalNAc...) threonine glycan. Residue Asn-162 is glycosylated (N-linked (GlcNAc...) (complex) asparagine). Residues Asn-183 and Asn-193 are each glycosylated (N-linked (GlcNAc...) asparagine). N-linked (GlcNAc...) asparagine glycosylation occurs at Asn-253. Residues 263-345 (SCKVPVKKAT…KTDASDVKPC (83 aa)) are sushi-like.

Post-translationally, N- and O-glycosylated. PubMed:6587378 also reports glycosylation on 'Asn-188' for their allele. Expressed by the liver and secreted in plasma.

It is found in the secreted. In terms of biological role, binds to various kinds of negatively charged substances such as heparin, phospholipids, and dextran sulfate. May prevent activation of the intrinsic blood coagulation cascade by binding to phospholipids on the surface of damaged cells. The protein is Beta-2-glycoprotein 1 (APOH) of Homo sapiens (Human).